The sequence spans 369 residues: DNA replication and repair protein RecF (369 aa).

Position 30–37 (30–37 (GQNAQGKT)) interacts with ATP.

The protein belongs to the RecF family.

The protein resides in the cytoplasm. Its function is as follows. The RecF protein is involved in DNA metabolism; it is required for DNA replication and normal SOS inducibility. RecF binds preferentially to single-stranded, linear DNA. It also seems to bind ATP. The polypeptide is DNA replication and repair protein RecF (Acetivibrio thermocellus (strain ATCC 27405 / DSM 1237 / JCM 9322 / NBRC 103400 / NCIMB 10682 / NRRL B-4536 / VPI 7372) (Clostridium thermocellum)).